A 440-amino-acid polypeptide reads, in one-letter code: Phosphatidylcholine-sterol acyltransferase (440 aa).

The signal sequence occupies residues 1–24 (MGPPGSPWQWVTLLLGLLLPPAAP). Asparagine 44 carries an N-linked (GlcNAc...) (complex) asparagine glycan. A disulfide bond links cysteine 74 and cysteine 98. Residue asparagine 108 is glycosylated (N-linked (GlcNAc...) (complex) asparagine). The Nucleophile role is filled by serine 205. Asparagine 296 is a glycosylation site (N-linked (GlcNAc...) (complex) asparagine). Cysteine 337 and cysteine 380 form a disulfide bridge. Active-site charge relay system residues include aspartate 369 and histidine 401. N-linked (GlcNAc...) (complex) asparagine glycosylation is present at asparagine 408. An O-linked (GalNAc...) threonine glycan is attached at threonine 431. O-linked (GalNAc...) serine glycosylation is present at serine 433.

This sequence belongs to the AB hydrolase superfamily. Lipase family. O- and N-glycosylated. O-glycosylation on Thr-431 and Ser-433 consists of sialylated galactose beta 1--&gt;3N-acetylgalactosamine structures. N-glycosylated sites contain sialylated triantennary and/or biantennary complex structures. Detected in blood plasma. Detected in cerebral spinal fluid (at protein level). Detected in liver. Expressed mainly in brain, liver and testes.

The protein localises to the secreted. It catalyses the reaction a sterol + a 1,2-diacyl-sn-glycero-3-phosphocholine = a sterol ester + a 1-acyl-sn-glycero-3-phosphocholine. The enzyme catalyses a 1-O-alkyl-2-acetyl-sn-glycero-3-phosphocholine + H2O = a 1-O-alkyl-sn-glycero-3-phosphocholine + acetate + H(+). The catalysed reaction is a 1-hexadecanoyl-2-acyl-sn-glycero-3-phosphocholine + (24S)-hydroxycholesterol = (24S)-24-hydroxycholesterol ester + 1-hexadecanoyl-sn-glycero-3-phosphocholine. It carries out the reaction (24S)-hydroxycholesterol + 1-hexadecanoyl-2-(9Z,12Z-octadecadienoyl)-sn-glycero-3-phosphocholine = (24S)-hydroxycholesterol 3-linoleoate + 1-hexadecanoyl-sn-glycero-3-phosphocholine. It catalyses the reaction 1-hexadecanoyl-2-(5Z,8Z,11Z,14Z-eicosatetraenoyl)-sn-glycero-3-phosphocholine + cholesterol = cholesteryl (5Z,8Z,11Z,14Z)-eicosatetraenoate + 1-hexadecanoyl-sn-glycero-3-phosphocholine. The enzyme catalyses 1-hexadecanoyl-2-(9Z-octadecenoyl)-sn-glycero-3-phosphocholine + cholesterol = cholesteryl (9Z-octadecenoate) + 1-hexadecanoyl-sn-glycero-3-phosphocholine. The catalysed reaction is 1-hexadecanoyl-2-(8Z,11Z,14Z-eicosatrienoyl)-sn-glycero-3-phosphocholine + cholesterol = cholesteryl (8Z,11Z,14Z)-eicosatrienoate + 1-hexadecanoyl-sn-glycero-3-phosphocholine. It carries out the reaction 1-hexadecanoyl-2-(5Z,8Z,11Z-eicosatrienoyl)-sn-glycero-3-phosphocholine + cholesterol = cholesteryl (5Z,8Z,11Z)-eicosatrienoate + 1-hexadecanoyl-sn-glycero-3-phosphocholine. It catalyses the reaction 1-hexadecanoyl-2-(5Z,8Z,11Z,14Z,17Z-eicosapentaenoyl)-sn-glycero-3-phosphocholine + cholesterol = (5Z,8Z,11Z,14Z,17Z-eicosapentaenoyl)-cholesterol + 1-hexadecanoyl-sn-glycero-3-phosphocholine. The enzyme catalyses 1-hexadecanoyl-2-(9Z,12Z-octadecadienoyl)-sn-glycero-3-phosphocholine + cholesterol = cholesteryl (9Z,12Z)-octadecadienoate + 1-hexadecanoyl-sn-glycero-3-phosphocholine. The catalysed reaction is 1-hexadecanoyl-2-(6Z,9Z,12Z-octadecatrienoyl)-sn-glycero-3-phosphocholine + cholesterol = (6Z,9Z,12Z-octadecatrienoyl)-cholesterol + 1-hexadecanoyl-sn-glycero-3-phosphocholine. It carries out the reaction 1-hexadecanoyl-2-(11Z,14Z,17Z-eicosatrienoyl)-sn-glycero-3-phosphocholine + cholesterol = (11Z,14Z,17Z-eicosatrienoyl)-cholesterol + 1-hexadecanoyl-sn-glycero-3-phosphocholine. It catalyses the reaction 1-hexadecanoyl-2-(9Z,12Z,15Z-octadecatrienoyl)-sn-glycero-3-phosphocholine + cholesterol = (9Z,12Z,15Z-octadecatrienoyl)-cholesterol + 1-hexadecanoyl-sn-glycero-3-phosphocholine. The enzyme catalyses 1-hexadecanoyl-2-(9Z,12Z-octadecadienoyl)-sn-glycero-3-phosphocholine + H2O = (9Z,12Z)-octadecadienoate + 1-hexadecanoyl-sn-glycero-3-phosphocholine + H(+). The catalysed reaction is 1-hexadecanoyl-2-(5Z,8Z,11Z,14Z-eicosatetraenoyl)-sn-glycero-3-phosphocholine + H2O = 1-hexadecanoyl-sn-glycero-3-phosphocholine + (5Z,8Z,11Z,14Z)-eicosatetraenoate + H(+). It carries out the reaction a 1-O-alkyl-2-acetyl-sn-glycero-3-phosphocholine + 1-hexadecanoyl-sn-glycero-3-phosphocholine = 1-hexadecanoyl-2-acetyl-sn-glycero-3-phosphocholine + a 1-O-alkyl-sn-glycero-3-phosphocholine. APOA1 is the most potent activator in plasma. Also activated by APOE, APOC1 and APOA4. Inhibited by haptoglobin and 5,5'-dithiobis-(2-nitrobenzoic acid) (DTNB). Functionally, central enzyme in the extracellular metabolism of plasma lipoproteins. Synthesized mainly in the liver and secreted into plasma where it converts cholesterol and phosphatidylcholines (lecithins) to cholesteryl esters and lysophosphatidylcholines on the surface of high and low density lipoproteins (HDLs and LDLs). The cholesterol ester is then transported back to the liver. Has a preference for plasma 16:0-18:2 or 18:O-18:2 phosphatidylcholines. Also produced in the brain by primary astrocytes, and esterifies free cholesterol on nascent APOE-containing lipoproteins secreted from glia and influences cerebral spinal fluid (CSF) APOE- and APOA1 levels. Together with APOE and the cholesterol transporter ABCA1, plays a key role in the maturation of glial-derived, nascent lipoproteins. Required for remodeling high-density lipoprotein particles into their spherical forms. Catalyzes the hydrolysis of 1-O-alkyl-2-acetyl-sn-glycero-3-phosphocholine (platelet-activating factor or PAF) to 1-O-alkyl-sn-glycero-3-phosphocholine (lyso-PAF). Also catalyzes the transfer of the acetate group from PAF to 1-hexadecanoyl-sn-glycero-3-phosphocholine forming lyso-PAF. Catalyzes the esterification of (24S)-hydroxycholesterol (24(S)OH-C), also known as cerebrosterol to produce 24(S)OH-C monoesters. The chain is Phosphatidylcholine-sterol acyltransferase (LCAT) from Homo sapiens (Human).